The sequence spans 710 residues: Chloride channel protein CLC-e (710 aa).

12 helical membrane-spanning segments follow: residues 74–94 (ELAIASACLVGVLTGVSVVLF), 122–142 (IGSNWLRVILVPTIGGLVVSI), 164–184 (VKAVLRPFLKTVAACVTLGTG), 193–213 (SVEIGASIAKGVNSLFNKSPQ), 222–242 (GSAAGISSGFNAAVAGCFFAV), 261–281 (TTSMVILSAVTASVVSEIGLG), 296–316 (PGELPLYLLLGALCGLVSLAL), 340–360 (VFPVMGGLSVGIIALVYPEVL), 379–399 (GLSADLLLQLVAVKIAATAWC), 412–432 (SLFIGGAAGMAYGKFIGLALA), 451–471 (GLVGMAATLAGVCQVPLTAVL), and 472–492 (LLFELTQDYRIVLPLLGAVGM). The tract at residues 500–534 (QSKRQETRETKETRKRKSQEAVQSLTSSDDESSTN) is disordered. Basic and acidic residues predominate over residues 502 to 511 (KRQETRETKE). Over residues 520–534 (AVQSLTSSDDESSTN) the composition is skewed to polar residues. CBS domains lie at 565 to 624 (MRTR…GNNR) and 640 to 702 (KCKV…ATRM). A helical membrane pass occupies residues 667 to 687 (HVAVVSGSIDAPRIHPVGVLD).

It belongs to the chloride channel (TC 2.A.49) family. Homodimer.

Its subcellular location is the membrane. It catalyses the reaction 2 chloride(in) + H(+)(out) = 2 chloride(out) + H(+)(in). In terms of biological role, voltage-gated thylakoid chloride (Cl) channel/transporter involved in chloride homeostasis after transition from light to dark. Influences chloroplast ultrastructure and subsequent photosynthetic electron transport. During photosynthetic response on transition from dark to low light, involved in a sequential mechanism of adaptation; VCCN1 and CLCe first trigger the activation of photoprotection, which is later down-regulated by KEA3 to a low steady state, while adjusting electron transport. Regulates photosynthesis by a pH-independent mechanism likely involving Cl(-) homeostasis. This chain is Chloride channel protein CLC-e, found in Arabidopsis thaliana (Mouse-ear cress).